The chain runs to 558 residues: Protein NRT1/ PTR FAMILY 2.7 (558 aa).

The next 12 membrane-spanning stretches (helical) occupy residues 31-51, 63-83, 90-110, 140-162, 178-198, 204-224, 319-339, 357-377, 399-419, 440-460, 479-499, and 518-538; these read FMIA…LNLI, IAAA…PAVA, FFGT…GVAL, LGVL…FTLA, FFNW…TAIV, ISWT…FLVF, IIPL…QLSL, IPAG…IIVN, VGIG…VEAK, VLWL…HFPG, SITS…IDLI, and VYWI…VCSW.

Belongs to the major facilitator superfamily. Proton-dependent oligopeptide transporter (POT/PTR) (TC 2.A.17) family. In terms of tissue distribution, expressed in shoots and in the cortex of mature roots. Not expressed in root tip meristematic cells.

The protein localises to the cell membrane. Functionally, transporter involved in a passive nitrate efflux. Not competent for chloride transport. This is Protein NRT1/ PTR FAMILY 2.7 (NPF2.7) from Arabidopsis thaliana (Mouse-ear cress).